We begin with the raw amino-acid sequence, 30 residues long: Dermaseptin-J10 (30 aa).

As to expression, expressed by the skin glands.

The protein resides in the secreted. Functionally, has antimicrobial activity. The chain is Dermaseptin-J10 from Phasmahyla jandaia (Jandaia leaf frog).